The following is a 561-amino-acid chain: Serine palmitoyltransferase 2 (561 aa).

A helical transmembrane segment spans residues Pro-57–Val-77. Lys-366 carries the post-translational modification N6-(pyridoxal phosphate)lysine. The chain crosses the membrane as a helical span at residues Leu-443 to Pro-463.

This sequence belongs to the class-II pyridoxal-phosphate-dependent aminotransferase family. LCB1 and LCB2 encode essential subunits of the enzyme and form a heterodimer. Component of the SPOTS complex, at least composed of LCB1/2 (LCB1 and/or LCB2), ORM1/2 (ORM1 and/or ORM2), SAC1 and TSC3. Interacts with LCB1 and TSC3. Pyridoxal 5'-phosphate is required as a cofactor.

Its subcellular location is the cytoplasm. The protein localises to the endoplasmic reticulum. It localises to the membrane. The catalysed reaction is L-serine + hexadecanoyl-CoA + H(+) = 3-oxosphinganine + CO2 + CoA. The protein operates within lipid metabolism; sphingolipid metabolism. Catalytic subunit of serine palmitoyltransferase (SPT), which catalyzes the committed step in the synthesis of sphingolipids, the condensation of serine with palmitoyl CoA to form the long chain base 3-ketosphinganine. The sequence is that of Serine palmitoyltransferase 2 (LCB2) from Saccharomyces cerevisiae (strain ATCC 204508 / S288c) (Baker's yeast).